Reading from the N-terminus, the 272-residue chain is Anamorsin homolog (272 aa).

The interval 1 to 156 (MDSMMNQKTV…KIGSSFALKK (156 aa)) is N-terminal SAM-like domain. Residues 157-185 (PVTNLFKIDLDDDVDLIDEDSLLTEEDLM) are linker. The [2Fe-2S] cluster site is built by cysteine 195, cysteine 202, cysteine 205, and cysteine 207. The interval 195–207 (CETTKKACKNCVC) is fe-S binding site A. Residues cysteine 233, cysteine 236, cysteine 244, and cysteine 247 each coordinate [4Fe-4S] cluster. 2 short sequence motifs (cx2C motif) span residues 233–236 (CGSC) and 244–247 (CGTC). The segment at 233 to 247 (CGSCGLGDAFRCGTC) is fe-S binding site B.

This sequence belongs to the anamorsin family. Monomer. Interacts with ATR3. Requires [2Fe-2S] cluster as cofactor. The cofactor is [4Fe-4S] cluster.

The protein resides in the cytoplasm. The protein localises to the mitochondrion intermembrane space. Functionally, component of the cytosolic iron-sulfur (Fe-S) protein assembly (CIA) machinery. Required for the maturation of extramitochondrial Fe-S proteins. Part of an electron transfer chain functioning in an early step of cytosolic Fe-S biogenesis, facilitating the de novo assembly of a [4Fe-4S] cluster on the cytosolic Fe-S scaffold complex. Electrons are transferred from NADPH via FAD- and FMN-containing diflavin oxidoreductase TAH18/ATR3. Together with the diflavin oxidoreductase, also required for the assembly of the diferric tyrosyl radical cofactor of ribonucleotide reductase (RNR), probably by providing electrons for reduction during radical cofactor maturation in the catalytic small subunit. Required for embryo development. The chain is Anamorsin homolog from Arabidopsis thaliana (Mouse-ear cress).